A 430-amino-acid chain; its full sequence is MSEPVAMTLLEDWCRGMGMDIHRSLLVTGIPEYCSHAEIEETLNGVLLPLGTYRVLNKIFLRQENVKAALVEVSEGVNLSSIPREFPGRGGVWRVVCRDPTQDDDFLKNLNEFLDGEGRTWEDMVRLLKLNPNPPLPNSNQPPPNWAEALGLLLGAVVQVIFYMDAAIRSRDEEARAEEAAEAELMEAWASTARKRVKKEPGLGVEVGSAFKMEDRNYWKNTEDHGDPPKPLVRRPGGKIRSRRRKQKKNLKQEPICWRKSQGSNYNSNYNKVNLEAGEAAQSSEIPESVKSNKKPFVKQEETVWKKKRVWRDPSDLPRSALPAADSPGNLEDSDQDGGPENPAKKKAMTWASNKIPVPTRKKKKMVSLGTLSYVLLDAEATKNKTAILKKGLGARRAVSVPHDAPASTSRPQKTKLGAFPRVSKDSRKL.

Residues 219–228 (WKNTEDHGDP) show a composition bias toward basic and acidic residues. 3 disordered regions span residues 219–270 (WKNT…NSNY), 313–364 (DPSD…RKKK), and 392–430 (GLGARRAVSVPHDAPASTSRPQKTKLGAFPRVSKDSRKL). The span at 232 to 250 (LVRRPGGKIRSRRRKQKKN) shows a compositional bias: basic residues. Positions 261–270 (SQGSNYNSNY) are enriched in polar residues.

Belongs to the PNMA family.

The protein is Paraneoplastic antigen-like protein 8A of Mus musculus (Mouse).